The following is a 209-amino-acid chain: Thiamine-phosphate synthase (209 aa).

4-amino-2-methyl-5-(diphosphooxymethyl)pyrimidine is bound by residues 41–45 (QLREK) and asparagine 73. 2 residues coordinate Mg(2+): aspartate 74 and aspartate 93. Serine 112 lines the 4-amino-2-methyl-5-(diphosphooxymethyl)pyrimidine pocket. 138–140 (TGT) contributes to the 2-[(2R,5Z)-2-carboxy-4-methylthiazol-5(2H)-ylidene]ethyl phosphate binding site. Position 141 (lysine 141) interacts with 4-amino-2-methyl-5-(diphosphooxymethyl)pyrimidine. Residues glycine 168 and 188-189 (VS) contribute to the 2-[(2R,5Z)-2-carboxy-4-methylthiazol-5(2H)-ylidene]ethyl phosphate site.

The protein belongs to the thiamine-phosphate synthase family. It depends on Mg(2+) as a cofactor.

The enzyme catalyses 2-[(2R,5Z)-2-carboxy-4-methylthiazol-5(2H)-ylidene]ethyl phosphate + 4-amino-2-methyl-5-(diphosphooxymethyl)pyrimidine + 2 H(+) = thiamine phosphate + CO2 + diphosphate. The catalysed reaction is 2-(2-carboxy-4-methylthiazol-5-yl)ethyl phosphate + 4-amino-2-methyl-5-(diphosphooxymethyl)pyrimidine + 2 H(+) = thiamine phosphate + CO2 + diphosphate. It carries out the reaction 4-methyl-5-(2-phosphooxyethyl)-thiazole + 4-amino-2-methyl-5-(diphosphooxymethyl)pyrimidine + H(+) = thiamine phosphate + diphosphate. It functions in the pathway cofactor biosynthesis; thiamine diphosphate biosynthesis; thiamine phosphate from 4-amino-2-methyl-5-diphosphomethylpyrimidine and 4-methyl-5-(2-phosphoethyl)-thiazole: step 1/1. Functionally, condenses 4-methyl-5-(beta-hydroxyethyl)thiazole monophosphate (THZ-P) and 2-methyl-4-amino-5-hydroxymethyl pyrimidine pyrophosphate (HMP-PP) to form thiamine monophosphate (TMP). The polypeptide is Thiamine-phosphate synthase (Alkaliphilus oremlandii (strain OhILAs) (Clostridium oremlandii (strain OhILAs))).